A 531-amino-acid chain; its full sequence is tRNA(Ile)-lysidine synthase (531 aa).

Position 32–37 (32–37 (SGGMDS)) interacts with ATP.

It belongs to the tRNA(Ile)-lysidine synthase family.

Its subcellular location is the cytoplasm. It carries out the reaction cytidine(34) in tRNA(Ile2) + L-lysine + ATP = lysidine(34) in tRNA(Ile2) + AMP + diphosphate + H(+). In terms of biological role, ligates lysine onto the cytidine present at position 34 of the AUA codon-specific tRNA(Ile) that contains the anticodon CAU, in an ATP-dependent manner. Cytidine is converted to lysidine, thus changing the amino acid specificity of the tRNA from methionine to isoleucine. This chain is tRNA(Ile)-lysidine synthase, found in Blochmanniella floridana.